The sequence spans 268 residues: Expansin-B3 (268 aa).

The N-terminal stretch at 1–25 is a signal peptide; the sequence is MAFSISKKAAVAALFSFLVVTCVAG. A glycan (N-linked (GlcNAc...) asparagine) is linked at Asn30. One can recognise an Expansin-like EG45 domain in the interval 62 to 168; it reads GGACGFKNTN…KRVPCNFPGL (107 aa). Cystine bridges form between Cys65/Cys93, Cys96/Cys163, and Cys101/Cys107. Residues 181–262 enclose the Expansin-like CBD domain; the sequence is VYFAVLVEYE…NWAPMAVYRS (82 aa). N-linked (GlcNAc...) asparagine glycosylation occurs at Asn238.

The protein belongs to the expansin family. Expansin B subfamily. As to expression, expressed in roots, coleoptiles and internodes.

The protein resides in the secreted. It localises to the cell wall. The protein localises to the membrane. In terms of biological role, may cause loosening and extension of plant cell walls by disrupting non-covalent bonding between cellulose microfibrils and matrix glucans. No enzymatic activity has been found. May be required for rapid internodal elongation in deepwater rice during submergence. The polypeptide is Expansin-B3 (EXPB3) (Oryza sativa subsp. japonica (Rice)).